The chain runs to 255 residues: Ras-like protein family member 12 (255 aa).

GTP is bound by residues 30 to 37 (GAMGSGKS), 77 to 81 (DTADQ), and 137 to 140 (NKVD).

It belongs to the small GTPase superfamily. Ras family.

It catalyses the reaction GTP + H2O = GDP + phosphate + H(+). In Danio rerio (Zebrafish), this protein is Ras-like protein family member 12 (RASL12).